The primary structure comprises 526 residues: Ferrochelatase-2, chloroplastic (526 aa).

The protein belongs to the ferrochelatase family.

Its subcellular location is the plastid. The protein resides in the chloroplast. It carries out the reaction heme b + 2 H(+) = protoporphyrin IX + Fe(2+). Its pathway is porphyrin-containing compound metabolism; protoheme biosynthesis; protoheme from protoporphyrin-IX: step 1/1. Catalyzes the ferrous insertion into protoporphyrin IX. In Oryza sativa subsp. japonica (Rice), this protein is Ferrochelatase-2, chloroplastic.